We begin with the raw amino-acid sequence, 199 residues long: Ribonuclease HII (199 aa).

Residues 10–199 enclose the RNase H type-2 domain; it reads HLVAGVDEVG…VKRALGLASN (190 aa). Residues Asp16, Glu17, and Asp108 each coordinate a divalent metal cation.

The protein belongs to the RNase HII family. Mn(2+) is required as a cofactor. Requires Mg(2+) as cofactor.

The protein localises to the cytoplasm. It catalyses the reaction Endonucleolytic cleavage to 5'-phosphomonoester.. Endonuclease that specifically degrades the RNA of RNA-DNA hybrids. The protein is Ribonuclease HII of Klebsiella pneumoniae (strain 342).